The chain runs to 480 residues: MNKLTSSYSPVHVIGGGLAGSEAAWQIAEAGVPVILHEMRGVRGTDAHKTDSLAELVCSNSFRSDDATSNAVGVLHAEMRLAGSIIMRCADLNQVPAGGALAVDREGFAEAVSAAIAAHPLITVLREEIRGLPPKEWDLAIIATGPLTAPDLADAIRAETGADALAFFDAIAPIVHADTIDMDICWHQSRYDKVGPGGTGKDYINCPLTQEEYNAFIDALIAGDKTGFKEWEGTPYFDGCLPIEVMAERGRETLRHGPMKPMGLTNAHNPSVKPYAVVQLRQDNALGTLYNMVGFQTKLKYGAQGEVFRMIPGLEKAEFARLGGLHRNTYINSPTLLDQSLTLKSRAGLRFAGQITGCEGYVESASIGLLAGRFAAAERKGASPAIPPVTTAFGALLNHITGGHIVSDDEPGKRSFQPMNVNFGLFPPLDPGALTRPEGAKRFRGKEKASAKKQAMASRALSDCATWLDKNLLIGGAATR.

Residue 15–20 (GGGLAG) coordinates FAD.

The protein belongs to the MnmG family. TrmFO subfamily. It depends on FAD as a cofactor.

The protein localises to the cytoplasm. It catalyses the reaction uridine(54) in tRNA + (6R)-5,10-methylene-5,6,7,8-tetrahydrofolate + NADH + H(+) = 5-methyluridine(54) in tRNA + (6S)-5,6,7,8-tetrahydrofolate + NAD(+). The enzyme catalyses uridine(54) in tRNA + (6R)-5,10-methylene-5,6,7,8-tetrahydrofolate + NADPH + H(+) = 5-methyluridine(54) in tRNA + (6S)-5,6,7,8-tetrahydrofolate + NADP(+). Catalyzes the folate-dependent formation of 5-methyl-uridine at position 54 (M-5-U54) in all tRNAs. This chain is Methylenetetrahydrofolate--tRNA-(uracil-5-)-methyltransferase TrmFO, found in Sinorhizobium medicae (strain WSM419) (Ensifer medicae).